Reading from the N-terminus, the 29-residue chain is Brevinin-2Tc (29 aa).

Residues Cys23 and Cys29 are joined by a disulfide bond.

The protein belongs to the frog skin active peptide (FSAP) family. Brevinin subfamily. In terms of tissue distribution, expressed by the skin glands.

The protein resides in the secreted. In terms of biological role, antibacterial activity against representative Gram-negative and Gram-positive bacteria. This is Brevinin-2Tc from Rana temporaria (European common frog).